The sequence spans 418 residues: MKKEEMIQKAYEIAVERYAAVGVDTEKVLKTMQDFHLSLHCWQADDVTGFEVQAGALSGGIQATGNYPGKARNIDELRADILKAASYIPGTHRLNLHEIYGDFQGKVVDRDQVEPEHFKSWIEWGKEHNMKLDFNSTSFSHPKSGDLSLSNPDEGIRQFWIEHTKRCRAVAEEMGKAQGDPCIMNLWVHDGSKDITVNRMKYRALLKDSLDQIFATEYKNMKDCIESKVFGIGLESYTVGSNDFYIGYGASRNKMVTLDTGHFHPTESVADKVSSLLLYVPELMLHVSRPVRWDSDHVTIMDDPTMELFSEIVRCGALERVHYGLDYFDASINRIGAYVIGSRAAQKCMTRALLEPIAKLREYEANGQGFQRLALLEEEKALPWNAVWDMFCLKNNVPVGEDFIAEIEKYEAEVTSKR.

Mn(2+) is bound by residues H262, D294, and D296.

This sequence belongs to the rhamnose isomerase family. The cofactor is Mn(2+).

The protein localises to the cytoplasm. The catalysed reaction is L-rhamnopyranose = L-rhamnulose. The protein operates within carbohydrate degradation; L-rhamnose degradation; glycerone phosphate from L-rhamnose: step 1/3. Catalyzes the interconversion of L-rhamnose and L-rhamnulose. The sequence is that of L-rhamnose isomerase from Bacteroides thetaiotaomicron (strain ATCC 29148 / DSM 2079 / JCM 5827 / CCUG 10774 / NCTC 10582 / VPI-5482 / E50).